We begin with the raw amino-acid sequence, 180 residues long: NEDD8-conjugating enzyme ubc-12 (180 aa).

The UBC core domain maps to Val-24 to Cys-180. Cys-112 serves as the catalytic Glycyl thioester intermediate.

Belongs to the ubiquitin-conjugating enzyme family. UBC12 subfamily.

Its subcellular location is the cytoplasm. The enzyme catalyses [E1 NEDD8-activating enzyme]-S-[NEDD8 protein]-yl-L-cysteine + [E2 NEDD8-conjugating enzyme]-L-cysteine = [E1 NEDD8-activating enzyme]-L-cysteine + [E2 NEDD8-conjugating enzyme]-S-[NEDD8-protein]-yl-L-cysteine.. The protein operates within protein modification; protein neddylation. Its function is as follows. Accepts the ubiquitin-like protein NEDD8 from the uba-3-ula-1 E1 complex and catalyzes its covalent attachment to other proteins. Plays a role in male tail tip morphogenesis. This chain is NEDD8-conjugating enzyme ubc-12, found in Caenorhabditis elegans.